The primary structure comprises 360 residues: Cyclin-dependent kinase 10 (360 aa).

The region spanning 39–323 is the Protein kinase domain; sequence FEKLNRIGEG…SGDCLESSYF (285 aa). ATP contacts are provided by residues 45 to 53 and K68; that span reads IGEGTYGIV. Residue D163 is the Proton acceptor of the active site. T196 bears the Phosphothreonine mark. The disordered stretch occupies residues 334-360; that stretch reads LMPTFPHHRNKRAAPAAAEGQSKRCRP.

This sequence belongs to the protein kinase superfamily. CMGC Ser/Thr protein kinase family. CDC2/CDKX subfamily. As to quaternary structure, heterodimer with CCNQ, the interaction is required for kinase activity. Interacts with ETS2. Interacts with PRK2.

The protein localises to the cytoplasm. Its subcellular location is the cytoskeleton. It is found in the cilium basal body. The enzyme catalyses L-seryl-[protein] + ATP = O-phospho-L-seryl-[protein] + ADP + H(+). The catalysed reaction is L-threonyl-[protein] + ATP = O-phospho-L-threonyl-[protein] + ADP + H(+). Cyclin-dependent kinase that phosphorylates the transcription factor ETS2 (in vitro) and positively controls its proteasomal degradation (in cells). Involved in the regulation of actin cytoskeleton organization through the phosphorylation of actin dynamics regulators such as PKN2. Is a negative regulator of ciliogenesis through phosphorylation of PKN2 and promotion of RhoA signaling. The sequence is that of Cyclin-dependent kinase 10 (Cdk10) from Mus musculus (Mouse).